The following is a 363-amino-acid chain: Ribosome-binding ATPase YchF (363 aa).

The OBG-type G domain occupies 3-256 (FKCGIVGLPN…LDDEERDEFM (254 aa)). Residue 12–17 (NVGKST) coordinates ATP. Positions 16 and 36 each coordinate Mg(2+). The TGS domain occupies 278–361 (NLQTYFTAGV…KDGDVMNFLF (84 aa)).

Belongs to the TRAFAC class OBG-HflX-like GTPase superfamily. OBG GTPase family. YchF/OLA1 subfamily. It depends on Mg(2+) as a cofactor.

Its function is as follows. ATPase that binds to both the 70S ribosome and the 50S ribosomal subunit in a nucleotide-independent manner. This chain is Ribosome-binding ATPase YchF, found in Escherichia coli O157:H7.